A 751-amino-acid chain; its full sequence is Valine--tRNA ligase (751 aa).

Lysine 520 is an ATP binding site.

It belongs to the class-I aminoacyl-tRNA synthetase family. ValS type 2 subfamily.

Its subcellular location is the cytoplasm. It carries out the reaction tRNA(Val) + L-valine + ATP = L-valyl-tRNA(Val) + AMP + diphosphate. In terms of biological role, catalyzes the attachment of valine to tRNA(Val). As ValRS can inadvertently accommodate and process structurally similar amino acids such as threonine, to avoid such errors, it has a 'posttransfer' editing activity that hydrolyzes mischarged Thr-tRNA(Val) in a tRNA-dependent manner. The polypeptide is Valine--tRNA ligase (valS) (Nanoarchaeum equitans (strain Kin4-M)).